The chain runs to 57 residues: Bowman-Birk type proteinase inhibitor B4 (57 aa).

Disulfide bonds link Cys6–Cys55, Cys12–Cys17, Cys26–Cys33, and Cys30–Cys47.

It belongs to the Bowman-Birk serine protease inhibitor family. As to expression, expressed in bulb (at protein level).

Functionally, serine protease inhibitor. Inhibits trypsin (Ki = 110 nM) and very weakly inhibits chymotrypsin (Ki =1200 nM). Does not inhibit bacterial subtilisin. The sequence is that of Bowman-Birk type proteinase inhibitor B4 from Hyacinthus orientalis (Common hyacinth).